A 540-amino-acid chain; its full sequence is MNTAVTLLTEQAPQPIEEFGQLERQIIIILDFGSQYSELIARRIRETQVYSEVLSYRTSAEHLRQLNPKGIILSGGPSSVYSDRAPHCDPEIWNLGVPILGVCYGMQLMVNQLGGEVAKADRGEYGKASLHIDDPTDLLTNVEDGTTMWMSHGDSVTKMPPGFEVLAHTDNTPCAAVADHDKKLYGVQFHPEVVHSIGGLALIRNFVYHICECEPTWTTAAFVEEAIREVRAKVGDKRVLLALSGGVDSSTLAFLMHKAIGDQLTCVFIDQGFMRKYEPERLVKLFQEQFHIPVEYVNARDRFLDIMVGVTDPEEKRRRIGHEFIQVFEETSRNLGPFDYLAQGTLYPDVIESADTNVDPQTGERVAVKIKSHHNVGGLPKDLRFKLVEPLRKLFKDEVRKVGRSVGLPEEIVQRQPFPGPGLAIRILGEVTADRLNILRDADLIVRQEINQRGLYNEYWQAFAVLLPIRSVGVMGDQRTYAYPIVLRIVKSEDGMTADWARVPYDVLEAISNRIVNEVKGVNRVVFDITSKPPGTIEWE.

The 191-residue stretch at 26–216 folds into the Glutamine amidotransferase type-1 domain; sequence IIIILDFGSQ…VYHICECEPT (191 aa). The active-site Nucleophile is the C103. Active-site residues include H190 and E192. Residues 217 to 415 form the GMPS ATP-PPase domain; the sequence is WTTAAFVEEA…VGLPEEIVQR (199 aa). 244-250 contacts ATP; that stretch reads SGGVDSS.

Homodimer.

The enzyme catalyses XMP + L-glutamine + ATP + H2O = GMP + L-glutamate + AMP + diphosphate + 2 H(+). Its pathway is purine metabolism; GMP biosynthesis; GMP from XMP (L-Gln route): step 1/1. Catalyzes the synthesis of GMP from XMP. This is GMP synthase [glutamine-hydrolyzing] from Trichormus variabilis (strain ATCC 29413 / PCC 7937) (Anabaena variabilis).